Reading from the N-terminus, the 184-residue chain is Large ribosomal subunit protein uL6 (184 aa).

This sequence belongs to the universal ribosomal protein uL6 family. As to quaternary structure, part of the 50S ribosomal subunit.

This protein binds to the 23S rRNA, and is important in its secondary structure. It is located near the subunit interface in the base of the L7/L12 stalk, and near the tRNA binding site of the peptidyltransferase center. The polypeptide is Large ribosomal subunit protein uL6 (Salinibacter ruber (strain DSM 13855 / M31)).